The primary structure comprises 74 residues: uncharacterized protein (74 aa).

This is an uncharacterized protein from Invertebrate iridescent virus 6 (IIV-6).